The following is a 395-amino-acid chain: Calsequestrin-1 (395 aa).

The N-terminal stretch at 1-28 (MNAADRMGARVALLLLLVLGSPQSGVHG) is a signal peptide. Tyr-37 is subject to Phosphotyrosine. Ser-75 carries the phosphoserine modification. Residue Thr-118 is modified to Phosphothreonine. Residue Ser-210 is modified to Phosphoserine. Asn-344 carries N-linked (GlcNAc...) asparagine glycosylation. The segment at 376 to 395 (EGEINTEDDDDEDDDDDDDD) is disordered.

This sequence belongs to the calsequestrin family. Monomer; increases in response to a depletion of intracellular calcium. Homodimer. Homotetramer and homopolymer. Can form linear homooligomers. Ca(2+) ions promote oligomerization. Interacts (via C-terminal end and preferentially with the monomeric form) with STIM1; this interaction increases in response to a depletion of intracellular calcium, decreases both STIM1 aggregation and clustering, interaction of STIM1 with ORAI1 and store-operated Ca(2+) entry (SOCE) activity. Interacts with ASPH and TRDN. Post-translationally, N-glycosylated. As to expression, detected in skeletal muscle (at protein level). Detected in skeletal muscle.

It is found in the endoplasmic reticulum. The protein resides in the sarcoplasmic reticulum. Its subcellular location is the sarcoplasmic reticulum lumen. The protein localises to the mitochondrion matrix. It localises to the sarcoplasmic reticulum membrane. Functionally, calsequestrin is a high-capacity, moderate affinity, calcium-binding protein and thus acts as an internal calcium store in muscle. Calcium ions are bound by clusters of acidic residues at the protein surface, often at the interface between subunits. Can bind around 80 Ca(2+) ions. Regulates the release of lumenal Ca(2+) via the calcium release channel RYR1; this plays an important role in triggering muscle contraction. Negatively regulates store-operated Ca(2+) entry (SOCE) activity. The polypeptide is Calsequestrin-1 (CASQ1) (Oryctolagus cuniculus (Rabbit)).